The sequence spans 357 residues: Phosphate acyltransferase (357 aa).

The protein belongs to the PlsX family. Homodimer. Probably interacts with PlsY.

It localises to the cytoplasm. The catalysed reaction is a fatty acyl-[ACP] + phosphate = an acyl phosphate + holo-[ACP]. Its pathway is lipid metabolism; phospholipid metabolism. Its function is as follows. Catalyzes the reversible formation of acyl-phosphate (acyl-PO(4)) from acyl-[acyl-carrier-protein] (acyl-ACP). This enzyme utilizes acyl-ACP as fatty acyl donor, but not acyl-CoA. This Herminiimonas arsenicoxydans protein is Phosphate acyltransferase.